We begin with the raw amino-acid sequence, 273 residues long: Putative pyruvate, phosphate dikinase regulatory protein (273 aa).

Position 153 to 160 (153 to 160 (GISRTSKT)) interacts with ADP.

This sequence belongs to the pyruvate, phosphate/water dikinase regulatory protein family. PDRP subfamily.

The catalysed reaction is N(tele)-phospho-L-histidyl/L-threonyl-[pyruvate, phosphate dikinase] + ADP = N(tele)-phospho-L-histidyl/O-phospho-L-threonyl-[pyruvate, phosphate dikinase] + AMP + H(+). The enzyme catalyses N(tele)-phospho-L-histidyl/O-phospho-L-threonyl-[pyruvate, phosphate dikinase] + phosphate + H(+) = N(tele)-phospho-L-histidyl/L-threonyl-[pyruvate, phosphate dikinase] + diphosphate. Its function is as follows. Bifunctional serine/threonine kinase and phosphorylase involved in the regulation of the pyruvate, phosphate dikinase (PPDK) by catalyzing its phosphorylation/dephosphorylation. This chain is Putative pyruvate, phosphate dikinase regulatory protein, found in Rhizobium leguminosarum bv. trifolii (strain WSM2304).